Consider the following 362-residue polypeptide: Phosphoserine aminotransferase (362 aa).

L-glutamate-binding residues include serine 9 and arginine 42. Pyridoxal 5'-phosphate is bound by residues 76-77 (GR), tryptophan 102, threonine 153, aspartate 174, and glutamine 197. At lysine 198 the chain carries N6-(pyridoxal phosphate)lysine. 239-240 (NT) contacts pyridoxal 5'-phosphate.

The protein belongs to the class-V pyridoxal-phosphate-dependent aminotransferase family. SerC subfamily. As to quaternary structure, homodimer. Pyridoxal 5'-phosphate is required as a cofactor.

The protein localises to the cytoplasm. The enzyme catalyses O-phospho-L-serine + 2-oxoglutarate = 3-phosphooxypyruvate + L-glutamate. The catalysed reaction is 4-(phosphooxy)-L-threonine + 2-oxoglutarate = (R)-3-hydroxy-2-oxo-4-phosphooxybutanoate + L-glutamate. It participates in amino-acid biosynthesis; L-serine biosynthesis; L-serine from 3-phospho-D-glycerate: step 2/3. Its pathway is cofactor biosynthesis; pyridoxine 5'-phosphate biosynthesis; pyridoxine 5'-phosphate from D-erythrose 4-phosphate: step 3/5. Its function is as follows. Catalyzes the reversible conversion of 3-phosphohydroxypyruvate to phosphoserine and of 3-hydroxy-2-oxo-4-phosphonooxybutanoate to phosphohydroxythreonine. The sequence is that of Phosphoserine aminotransferase from Salmonella arizonae (strain ATCC BAA-731 / CDC346-86 / RSK2980).